A 246-amino-acid polypeptide reads, in one-letter code: Protein phosphatase PhpP (246 aa).

In terms of domain architecture, PPM-type phosphatase spans 2–240; that stretch reads EISLLTDVGQ…DNITVALVSM (239 aa). Mn(2+)-binding residues include aspartate 36, glycine 37, aspartate 192, and aspartate 231.

This sequence belongs to the PP2C family. Mn(2+) serves as cofactor.

It is found in the cytoplasm. It catalyses the reaction O-phospho-L-seryl-[protein] + H2O = L-seryl-[protein] + phosphate. The catalysed reaction is O-phospho-L-threonyl-[protein] + H2O = L-threonyl-[protein] + phosphate. Functionally, protein phosphatase able to dephosphorylate StkP-P and other phosphorylated protein substrates. PhpP and its cognate protein kinase StkP appear to constitute a functional signaling couple in vivo, PhpP's primary role being probably to control phosphorylation levels of StkP and of its targets. PhpP thus performs an essential control of StkP activity. Also dephosphorylates DivIVA in vivo. This is Protein phosphatase PhpP (phpP) from Streptococcus pneumoniae serotype 2 (strain D39 / NCTC 7466).